A 187-amino-acid polypeptide reads, in one-letter code: Peptidyl-tRNA hydrolase (187 aa).

Phenylalanine 14 contacts tRNA. Histidine 19 serves as the catalytic Proton acceptor. TRNA is bound by residues tyrosine 64, asparagine 66, and asparagine 112.

Belongs to the PTH family. Monomer.

The protein localises to the cytoplasm. It catalyses the reaction an N-acyl-L-alpha-aminoacyl-tRNA + H2O = an N-acyl-L-amino acid + a tRNA + H(+). Functionally, hydrolyzes ribosome-free peptidyl-tRNAs (with 1 or more amino acids incorporated), which drop off the ribosome during protein synthesis, or as a result of ribosome stalling. Catalyzes the release of premature peptidyl moieties from peptidyl-tRNA molecules trapped in stalled 50S ribosomal subunits, and thus maintains levels of free tRNAs and 50S ribosomes. The chain is Peptidyl-tRNA hydrolase from Oceanobacillus iheyensis (strain DSM 14371 / CIP 107618 / JCM 11309 / KCTC 3954 / HTE831).